The following is a 136-amino-acid chain: MNTTATTVSRGRRPPRTLYRGDPGMWSWVCHRISGATIFFFLFVHVLDAAMLRVSPQTYNAVLATYKTPIVGLMEYGLVAAVLFHALNGIRVILIDFWSEGPRYQRLMLWIIGSVFLLLMVPAGVVVGIHMWEHFR.

The next 3 helical transmembrane spans lie at 32 to 52, 70 to 90, and 109 to 129; these read RISG…AAML, IVGL…LNGI, and LWII…VVGI. H85 lines the heme pocket.

This sequence belongs to the cytochrome b560 family. In terms of assembly, part of an enzyme complex containing four subunits: a flavoprotein (SdhA), an iron-sulfur protein (SdhB), plus two membrane-anchoring proteins (SdhC and SdhD). Requires heme as cofactor.

Its subcellular location is the cell membrane. Its function is as follows. Membrane-anchoring subunit of succinate dehydrogenase 2 (Sdh2). Sdh2 may catalyze the two-electron oxidation of succinate to fumarate with a corresponding reduction of quinone to quinol under low oxygen conditions, when the primary aerobic succinate dehydrogenase (Sdh1) is inhibited. Sdh2 seems to be the generator of the proton motive force (PMF) under hypoxia. The polypeptide is Succinate dehydrogenase 2 membrane subunit SdhC (Mycobacterium tuberculosis (strain ATCC 25618 / H37Rv)).